The chain runs to 430 residues: GTPase Obg (430 aa).

One can recognise an Obg domain in the interval methionine 1–leucine 158. Residues lysine 118 to proline 145 are disordered. Residues alanine 159–glutamate 329 form the OBG-type G domain. GTP is bound by residues glycine 165–serine 172, phenylalanine 190–lysine 194, aspartate 212–glycine 215, asparagine 282–aspartate 285, and serine 310–isoleucine 312. Positions 172 and 192 each coordinate Mg(2+). The OCT domain occupies lysine 352–glutamate 430.

Belongs to the TRAFAC class OBG-HflX-like GTPase superfamily. OBG GTPase family. In terms of assembly, monomer. It depends on Mg(2+) as a cofactor.

It localises to the cytoplasm. Its function is as follows. An essential GTPase which binds GTP, GDP and possibly (p)ppGpp with moderate affinity, with high nucleotide exchange rates and a fairly low GTP hydrolysis rate. Plays a role in control of the cell cycle, stress response, ribosome biogenesis and in those bacteria that undergo differentiation, in morphogenesis control. The polypeptide is GTPase Obg (Staphylococcus aureus (strain bovine RF122 / ET3-1)).